We begin with the raw amino-acid sequence, 177 residues long: Anditomin synthesis protein L (177 aa).

A run of 2 helical transmembrane segments spans residues 54–74 (VVNS…PFIM) and 117–137 (IVNF…YMVF). Residue asparagine 165 is glycosylated (N-linked (GlcNAc...) asparagine).

Its subcellular location is the membrane. Its pathway is secondary metabolite biosynthesis; terpenoid biosynthesis. Its function is as follows. Part of the gene cluster that mediates the biosynthesis of anditomin, a fungal meroterpenoid. The first step of the pathway is the synthesis of 3,5-dimethylorsellinic acid (DMOA) by the polyketide synthase andM. DMOA is then converted to the phthalide compound 5,7-dihydroxy-4,6-dimethylphthalide (DHDMP) by the cytochrome P450 monooxygenase andK, which is further prenylated by the prenyltransferase andD to yield farnesyl-DHDMP. Further epoxidation by the FAD-dependent monooxygenase andE leads to epoxyfarnesyl-DHDMP. The next step involves the terpene cyclase andB that converts epoxyfarnesyl-DHDMP into preandiloid A through opening of the epoxide ring followed by the cyclization of the farnesyl moiety. Preandiloid A is in turn oxidized at the C-3 hydroxyl group to yield preandiloid B by the dehydrogenase andC. The dioxygenase andA is solely responsible for the dehydrogenation of preandiloid B leading to the enone preandiloid C, as well as for the intriguing structural rearrangement to generate the bicyclo[2.2.2]octane core, transforming preandiloid C into andiconin. FAD-binding monooxygenase andJ then produces andilesin D which is reduced by dehydrogenase andI to yield andilesin A. Action of acetyltransferase andG followed by a spontaneous acetate elimination leads then to andilesin B, which is in turn substrate of the short chain dehydrogenase andH to yield andilesin C. Finally, the dioxygenase andF catalyzes the transformation of andilesin C to anditomin. The exact role of andL within the anditomin biosynthetic pathway has not been identified yet. The sequence is that of Anditomin synthesis protein L from Emericella variicolor (Aspergillus stellatus).